The sequence spans 380 residues: 3-dehydroquinate synthase (380 aa).

It belongs to the archaeal-type DHQ synthase family.

The enzyme catalyses 2-amino-2,3,7-trideoxy-D-lyxo-hept-6-ulosonate + NAD(+) + H2O = 3-dehydroquinate + NH4(+) + NADH + H(+). Functionally, catalyzes the oxidative deamination and cyclization of 2-amino-3,7-dideoxy-D-threo-hept-6-ulosonic acid (ADH) to yield 3-dehydroquinate (DHQ), which is fed into the canonical shikimic pathway of aromatic amino acid biosynthesis. The polypeptide is 3-dehydroquinate synthase (Methanosarcina mazei (strain ATCC BAA-159 / DSM 3647 / Goe1 / Go1 / JCM 11833 / OCM 88) (Methanosarcina frisia)).